The sequence spans 245 residues: Probable phosphatase ECA2529 (245 aa).

Residues His-7, His-9, His-15, His-40, Glu-73, His-101, His-131, Asp-192, and His-194 each coordinate Zn(2+).

The protein belongs to the PHP family. Homotrimer. Zn(2+) is required as a cofactor.

The chain is Probable phosphatase ECA2529 from Pectobacterium atrosepticum (strain SCRI 1043 / ATCC BAA-672) (Erwinia carotovora subsp. atroseptica).